The chain runs to 432 residues: Adenylosuccinate synthetase (432 aa).

Residues 13-19 (GDEGKGK) and 41-43 (GHT) contribute to the GTP site. Asp14 serves as the catalytic Proton acceptor. Mg(2+) contacts are provided by Asp14 and Gly41. IMP is bound by residues 14–17 (DEGK), 39–42 (NAGH), Thr131, Arg145, Gln226, Thr241, and Arg305. Catalysis depends on His42, which acts as the Proton donor. Substrate is bound at residue 301–307 (SVTGRAR). GTP-binding positions include Arg307, 333–335 (KLD), and 416–418 (STG).

It belongs to the adenylosuccinate synthetase family. Homodimer. The cofactor is Mg(2+).

The protein localises to the cytoplasm. The catalysed reaction is IMP + L-aspartate + GTP = N(6)-(1,2-dicarboxyethyl)-AMP + GDP + phosphate + 2 H(+). It participates in purine metabolism; AMP biosynthesis via de novo pathway; AMP from IMP: step 1/2. Its function is as follows. Plays an important role in the de novo pathway of purine nucleotide biosynthesis. Catalyzes the first committed step in the biosynthesis of AMP from IMP. In Neisseria meningitidis serogroup C (strain 053442), this protein is Adenylosuccinate synthetase.